Here is a 471-residue protein sequence, read N- to C-terminus: Glutamate--tRNA ligase (471 aa).

Residues 9–19 (PSPTGYLHVGG) carry the 'HIGH' region motif. The Zn(2+) site is built by Cys98, Cys100, Cys125, and His127. Positions 237–241 (KLSKR) match the 'KMSKS' region motif. Lys240 contacts ATP.

Belongs to the class-I aminoacyl-tRNA synthetase family. Glutamate--tRNA ligase type 1 subfamily. As to quaternary structure, monomer. Requires Zn(2+) as cofactor.

It is found in the cytoplasm. It carries out the reaction tRNA(Glu) + L-glutamate + ATP = L-glutamyl-tRNA(Glu) + AMP + diphosphate. Its function is as follows. Catalyzes the attachment of glutamate to tRNA(Glu) in a two-step reaction: glutamate is first activated by ATP to form Glu-AMP and then transferred to the acceptor end of tRNA(Glu). The polypeptide is Glutamate--tRNA ligase (Escherichia coli (strain SMS-3-5 / SECEC)).